Reading from the N-terminus, the 525-residue chain is GMP synthase [glutamine-hydrolyzing] (525 aa).

Residues 9–207 (RILILDFGSQ…VRDICQCEAL (199 aa)) form the Glutamine amidotransferase type-1 domain. Cysteine 86 serves as the catalytic Nucleophile. Catalysis depends on residues histidine 181 and glutamate 183. The GMPS ATP-PPase domain occupies 208–400 (WTPAKIIDDA…LGLPYDMLYR (193 aa)). 235 to 241 (SGGVDSS) serves as a coordination point for ATP.

As to quaternary structure, homodimer.

The catalysed reaction is XMP + L-glutamine + ATP + H2O = GMP + L-glutamate + AMP + diphosphate + 2 H(+). It functions in the pathway purine metabolism; GMP biosynthesis; GMP from XMP (L-Gln route): step 1/1. Catalyzes the synthesis of GMP from XMP. This chain is GMP synthase [glutamine-hydrolyzing], found in Salmonella schwarzengrund (strain CVM19633).